The following is a 483-amino-acid chain: Malonate-semialdehyde dehydrogenase 2 (483 aa).

NAD(+)-binding residues include Phe-152, Lys-176, Glu-179, Arg-180, and Ser-229. Catalysis depends on Cys-284, which acts as the Nucleophile. NAD(+) is bound at residue Glu-384.

It belongs to the aldehyde dehydrogenase family. IolA subfamily. Homotetramer.

It catalyses the reaction 3-oxopropanoate + NAD(+) + CoA + H2O = hydrogencarbonate + acetyl-CoA + NADH + H(+). It carries out the reaction 2-methyl-3-oxopropanoate + NAD(+) + CoA + H2O = propanoyl-CoA + hydrogencarbonate + NADH + H(+). It participates in polyol metabolism; myo-inositol degradation into acetyl-CoA; acetyl-CoA from myo-inositol: step 7/7. Catalyzes the oxidation of malonate semialdehyde (MSA) and methylmalonate semialdehyde (MMSA) into acetyl-CoA and propanoyl-CoA, respectively. Is involved in a myo-inositol catabolic pathway. Bicarbonate, and not CO2, is the end-product of the enzymatic reaction. This is Malonate-semialdehyde dehydrogenase 2 from Geobacillus thermodenitrificans (strain NG80-2).